The chain runs to 206 residues: Small ribosomal subunit protein uS4 (206 aa).

Residues 15–46 (MGENIWGRPKSPVNKREYGPGQHGQRRKNKLS) form a disordered region. An S4 RNA-binding domain is found at 94-154 (RRLDAIVYRA…EKSRQLALVL (61 aa)).

This sequence belongs to the universal ribosomal protein uS4 family. Part of the 30S ribosomal subunit. Contacts protein S5. The interaction surface between S4 and S5 is involved in control of translational fidelity.

Functionally, one of the primary rRNA binding proteins, it binds directly to 16S rRNA where it nucleates assembly of the body of the 30S subunit. With S5 and S12 plays an important role in translational accuracy. This Cereibacter sphaeroides (strain ATCC 17029 / ATH 2.4.9) (Rhodobacter sphaeroides) protein is Small ribosomal subunit protein uS4.